The primary structure comprises 138 residues: Large ribosomal subunit protein uL16 (138 aa).

The segment covering 1–13 (MLQPARRKYRKEQ) has biased composition (basic residues). A disordered region spans residues 1–22 (MLQPARRKYRKEQKGRNTGVAT).

Belongs to the universal ribosomal protein uL16 family. As to quaternary structure, part of the 50S ribosomal subunit.

Functionally, binds 23S rRNA and is also seen to make contacts with the A and possibly P site tRNAs. This is Large ribosomal subunit protein uL16 from Polaromonas naphthalenivorans (strain CJ2).